A 353-amino-acid polypeptide reads, in one-letter code: MTIALGRFTKEENDLFDIMDDWLRRDRFVFVGWSGLLLFPCAYFALGGWFTGTTFVTSWYTHGLASSYLEGCNFLTAAVSTPANSLAHSLLLLWGPEAQGDFTRWCQLGGLWTFVALHGAFALIGFMLRQFELARSVQLRPYNAIAFSGPIAVFVSVFLIYPLGQSGWFFAPSFGVAAIFRFILFFQGFHNWTLNPFHMMGVAGVLGAALLCAIHGATVENTLFEDGDGANTFRAFNPTQAEETYSMVTANRFWSQIFGVAFSNKRWLHFFMLFVPVTGLWMSALGVVGLALNLRAYDFVSQEIRAAEDPEFETFYTKNILLNEGIRAWMAAQDQPHENLIFPEEVLPRGNAL.

Thr2 is modified (N-acetylthreonine). A Phosphothreonine modification is found at Thr2. A helical membrane pass occupies residues 41–61 (CAYFALGGWFTGTTFVTSWYT). His118 lines the chlorophyll a pocket. A helical transmembrane segment spans residues 125-141 (GFMLRQFELARSVQLRP). Gln130 and Asn143 together coordinate pheophytin a. A helical transmembrane segment spans residues 153–166 (VFVSVFLIYPLGQS). Position 198 (His198) interacts with chlorophyll a. The chain crosses the membrane as a helical span at residues 208-228 (AALLCAIHGATVENTLFEDGD). The a plastoquinone site is built by His215 and Phe262. His215 provides a ligand contact to Fe cation. Position 269 (His269) interacts with Fe cation. The chain crosses the membrane as a helical span at residues 279 to 295 (GLWMSALGVVGLALNLR).

It belongs to the reaction center PufL/M/PsbA/D family. As to quaternary structure, PSII is composed of 1 copy each of membrane proteins PsbA, PsbB, PsbC, PsbD, PsbE, PsbF, PsbH, PsbI, PsbJ, PsbK, PsbL, PsbM, PsbT, PsbX, PsbY, PsbZ, Psb30/Ycf12, at least 3 peripheral proteins of the oxygen-evolving complex and a large number of cofactors. It forms dimeric complexes. The D1/D2 heterodimer binds P680, chlorophylls that are the primary electron donor of PSII, and subsequent electron acceptors. It shares a non-heme iron and each subunit binds pheophytin, quinone, additional chlorophylls, carotenoids and lipids. There is also a Cl(-1) ion associated with D1 and D2, which is required for oxygen evolution. The PSII complex binds additional chlorophylls, carotenoids and specific lipids. serves as cofactor.

Its subcellular location is the plastid. The protein localises to the chloroplast thylakoid membrane. It catalyses the reaction 2 a plastoquinone + 4 hnu + 2 H2O = 2 a plastoquinol + O2. Its function is as follows. Photosystem II (PSII) is a light-driven water:plastoquinone oxidoreductase that uses light energy to abstract electrons from H(2)O, generating O(2) and a proton gradient subsequently used for ATP formation. It consists of a core antenna complex that captures photons, and an electron transfer chain that converts photonic excitation into a charge separation. The D1/D2 (PsbA/PsbD) reaction center heterodimer binds P680, the primary electron donor of PSII as well as several subsequent electron acceptors. D2 is needed for assembly of a stable PSII complex. The chain is Photosystem II D2 protein from Lemna minor (Common duckweed).